A 381-amino-acid chain; its full sequence is Succinyl-diaminopimelate desuccinylase (381 aa).

His68 lines the Zn(2+) pocket. Asp70 is an active-site residue. Asp101 contributes to the Zn(2+) binding site. Glu135 functions as the Proton acceptor in the catalytic mechanism. Glu136, Glu164, and His350 together coordinate Zn(2+).

It belongs to the peptidase M20A family. DapE subfamily. In terms of assembly, homodimer. The cofactor is Zn(2+). Co(2+) is required as a cofactor.

The catalysed reaction is N-succinyl-(2S,6S)-2,6-diaminopimelate + H2O = (2S,6S)-2,6-diaminopimelate + succinate. Its pathway is amino-acid biosynthesis; L-lysine biosynthesis via DAP pathway; LL-2,6-diaminopimelate from (S)-tetrahydrodipicolinate (succinylase route): step 3/3. Its function is as follows. Catalyzes the hydrolysis of N-succinyl-L,L-diaminopimelic acid (SDAP), forming succinate and LL-2,6-diaminopimelate (DAP), an intermediate involved in the bacterial biosynthesis of lysine and meso-diaminopimelic acid, an essential component of bacterial cell walls. The chain is Succinyl-diaminopimelate desuccinylase from Neisseria gonorrhoeae (strain NCCP11945).